The chain runs to 311 residues: Tyrosine recombinase XerD (311 aa).

Positions 3–88 (DMSAAYVEAF…ALRQFYKFLY (86 aa)) constitute a Core-binding (CB) domain. The 190-residue stretch at 109 to 298 (TLPKTLSIED…LEERLHDLVQ (190 aa)) folds into the Tyr recombinase domain. Residues Arg-156, Lys-180, His-250, Arg-253, and His-276 contribute to the active site. Catalysis depends on Tyr-285, which acts as the O-(3'-phospho-DNA)-tyrosine intermediate.

Belongs to the 'phage' integrase family. XerD subfamily. Forms a cyclic heterotetrameric complex composed of two molecules of XerC and two molecules of XerD.

The protein resides in the cytoplasm. In terms of biological role, site-specific tyrosine recombinase, which acts by catalyzing the cutting and rejoining of the recombining DNA molecules. The XerC-XerD complex is essential to convert dimers of the bacterial chromosome into monomers to permit their segregation at cell division. It also contributes to the segregational stability of plasmids. The sequence is that of Tyrosine recombinase XerD from Rhizobium meliloti (strain 1021) (Ensifer meliloti).